We begin with the raw amino-acid sequence, 154 residues long: Protein ripply (154 aa).

The WRPW motif motif lies at 38 to 41 (WRPW). Disordered stretches follow at residues 54–86 (IRERRSKPYARPSSTSNGSTRGPEPGPTSFQHP) and 121–154 (EDPAQSDDSDFESDYEDDSDTDYKPLKRNAPILN). Residues 85-119 (HPVKLHWSKPVYDYMYQYGKQLLDAFPVQATICIV) are ripply homology domain. The span at 121 to 140 (EDPAQSDDSDFESDYEDDSD) shows a compositional bias: acidic residues.

It belongs to the ripply family. As to expression, in the late gastrula stage, expression appears in the dorsal presomitic mesoderm and in the first three pairs of nascent somites. Expressed strongly in forming somites and then expression is rapidly down-regulated except in the first somite pair where expression is maintained for a longer period. Also expressed in the presumptive notochord and in the tail bud at the 48 hour larval stage. Expression disappears by the 72 hour stage.

Its subcellular location is the nucleus. Functionally, may play a role in somitogenesis. In Branchiostoma belcheri (Amphioxus), this protein is Protein ripply.